The following is a 115-amino-acid chain: Nitrogen regulatory protein P-II 1 (115 aa).

An O-UMP-tyrosine modification is found at tyrosine 54.

This sequence belongs to the P(II) protein family.

Functionally, could be involved in the regulation of nitrogen fixation. This chain is Nitrogen regulatory protein P-II 1, found in Methanothermobacter thermautotrophicus (strain ATCC 29096 / DSM 1053 / JCM 10044 / NBRC 100330 / Delta H) (Methanobacterium thermoautotrophicum).